We begin with the raw amino-acid sequence, 184 residues long: FMRFamide-like neuropeptides 3 (184 aa).

The first 23 residues, 1 to 23, serve as a signal peptide directing secretion; that stretch reads MISPNHLILLFCVNCAFLVASDA. Positions 24–25 are excised as a propeptide; sequence TP. F35 is modified (phenylalanine amide). The propeptide occupies 39–73; it reads AIADEMTFEEDGYYPSNVMWKRSTVDSSEPVIRDQ. Phenylalanine amide is present on residues F82, F95, F111, and F126. The segment at 90–110 is disordered; that stretch reads FGTMRFGKRNPENDTPFGTMR. A propeptide spanning residues 130–142 is cleaved from the precursor; sequence EDGNAPFGTMKFG. The segment at 150–184 is disordered; sequence LGTMRFGKRSADDSAPFGTMRFGKRNPLGTMRFGK. 3 positions are modified to phenylalanine amide: F155, F171, and F182.

Belongs to the FARP (FMRFamide related peptide) family. In terms of tissue distribution, each flp gene is expressed in a distinct set of neurons. Flp-3 is expressed in the IL1 and PQR neurons.

It localises to the secreted. Functionally, FMRFamides and FMRFamide-like peptides are neuropeptides. SAEPFGTMRF-amide inhibits the activity of dissected pharyngeal myogenic muscle system. In Caenorhabditis elegans, this protein is FMRFamide-like neuropeptides 3.